A 298-amino-acid polypeptide reads, in one-letter code: Plasmodesmata-located protein 7 (298 aa).

The signal sequence occupies residues 1–30; it reads MPMAKLRNIIKTLSIFFFLIAATAPSLSSA. The Extracellular segment spans residues 31–258; the sequence is TSATDTFVFG…YKTNYGGEKT (228 aa). 2 consecutive Gnk2-homologous domains span residues 35-139 and 140-240; these read DTFV…NISF and LGQE…TDGA. Cystine bridges form between Cys42–Cys117, Cys93–Cys102, Cys105–Cys130, Cys152–Cys218, Cys194–Cys203, and Cys206–Cys231. The chain crosses the membrane as a helical span at residues 259–279; it reads FAIIIGLLAAVVLLIIFLLFL. A necessary and sufficient for plasmodesmal targeting region spans residues 259 to 279; the sequence is FAIIIGLLAAVVLLIIFLLFL. At 280–298 the chain is on the cytoplasmic side; that stretch reads RGVCSRGGDFSILHSFTLI.

It belongs to the cysteine-rich repeat secretory protein family. Plasmodesmata-located proteins (PDLD) subfamily. As to quaternary structure, (Microbial infection) Interacts with Grapevine fanleaf virus (GFLV) 2B-MP. As to expression, highly expressed in lateral root and elongation zone.

The protein localises to the cell membrane. It is found in the cell junction. Its subcellular location is the plasmodesma. Modulates cell-to-cell trafficking. The sequence is that of Plasmodesmata-located protein 7 from Arabidopsis thaliana (Mouse-ear cress).